The chain runs to 349 residues: Glucose 1-dehydrogenase 1 (349 aa).

Cysteine 39 provides a ligand contact to Zn(2+). Threonine 41 is a substrate binding site. Zn(2+) contacts are provided by histidine 64 and glutamate 65. 2 residues coordinate substrate: glutamate 110 and glutamate 146. Glutamate 146 lines the Zn(2+) pocket. Residues 178-181 (AGPI), 260-262 (LGV), and 289-291 (SVN) contribute to the NADP(+) site. Asparagine 291 contacts substrate.

This sequence belongs to the zinc-containing alcohol dehydrogenase family. Glucose 1-dehydrogenase subfamily. It depends on Zn(2+) as a cofactor.

The enzyme catalyses D-glucose + NAD(+) = D-glucono-1,5-lactone + NADH + H(+). It carries out the reaction D-glucose + NADP(+) = D-glucono-1,5-lactone + NADPH + H(+). In terms of biological role, catalyzes the NAD(P)(+)-dependent oxidation of D-glucose to D-gluconate via gluconolactone. Can utilize both NAD(+) and NADP(+) as electron acceptor. Is involved in the degradation of glucose through a non-phosphorylative variant of the Entner-Doudoroff pathway. The protein is Glucose 1-dehydrogenase 1 of Caldivirga maquilingensis (strain ATCC 700844 / DSM 13496 / JCM 10307 / IC-167).